A 320-amino-acid chain; its full sequence is Cytochrome f (320 aa).

Residues 1 to 35 (MQNRNTFSWVKEQMTRFISVSIMIYVITRTSISNA) form the signal peptide. Residues Tyr36, Cys56, Cys59, and His60 each coordinate heme. Residues 286 to 306 (VQGLLFFLASVILAQIFLVLK) traverse the membrane as a helical segment.

Belongs to the cytochrome f family. In terms of assembly, the 4 large subunits of the cytochrome b6-f complex are cytochrome b6, subunit IV (17 kDa polypeptide, petD), cytochrome f and the Rieske protein, while the 4 small subunits are PetG, PetL, PetM and PetN. The complex functions as a dimer. Heme is required as a cofactor.

The protein resides in the plastid. It localises to the chloroplast thylakoid membrane. Component of the cytochrome b6-f complex, which mediates electron transfer between photosystem II (PSII) and photosystem I (PSI), cyclic electron flow around PSI, and state transitions. The polypeptide is Cytochrome f (Drimys granadensis).